Consider the following 1719-residue polypeptide: MRTLLPPVGSEVFRRFTQSSLNEIQQKQQIREEERKRTNAQVSEELPEPASDLEAGKPLPFIYGEPPHELLNVPLEDIDPFYQSQKTFIVLSKGNIIYRFNAESSLYLLSPFNALRIVAIKILIHSLFSLFIMATILTNCAFMTLSDPPAWSKTMEYVFTFIYTFEATIKILSRGFCVGKFTFLKDPWNWLDFMVISMAYLTELVDLGNVSVLRTFRVLRALKTITVIPGLKTIVGALIQSVRKLADAMVLTVFCLSVFALIGLQLFMGNLRQKCVLIPQWLYGNLTFDINSTNGYYGNDTHDNGTKSKHLEFEFERHINNPDNYYYLTGQGDPLLCGNSSDAGVCPESYVCLKVGANPNYGYTSYDSFGWAFLALFRLMTQDFWENLFQLTLRTAGKTYMIFFVVVIFLGSFYLINLILAVVAMAYAEQNEATLAEAKEKEEEYIHILEALKKREEEQAARKEPHSTVEGFEDDHRLCPPCWYAFANIFLKWDCCGCWRHLKECLYAIVMDPFVDLGITICIILNTVFMAMEHYPMSADFEELLSVGNLVFTGIFTGEMVFKILAMDPYFYFQVGWNIFDSIIVTISLVELGLANVQGLSVLRSFRLMRVFKLAKSWPTLNMLIKIIGNSVGALGNLTLVLAIIVFIFAVVGMQLFGKNYKDCVCRISEDCVLPRWHMNDFFHAFLIIFRVLCGEWIESMWDCMEVSGQTMCLIVFMMVLVIGNLVVLNLFLALLLSSFSGDNLTTQDDEGENNLQIAINRINRAMSWTKTYILLYVYTLTESNLNQHFAVSDDEEQRRVKDILALTSVSSDKLVSHHCGNDFFRVPIAEAESDSDDSDYDEDKDSQCDESSVCSSVQKPEVQEEEMDENCVAKTPTDCWTKKCYSRCPFLDIDTSQGRGKIWCNIRRTCFSIVENNYFESFIVFMILLSSGALAFEDIYLEKHQLIKSILEYADKVFTYVFVMEMVLKWFAYGFKSYFSNAWCWLDFLIVDVSLVSLTANILGYSELGAIKSLRTLRALRPLRALSRFEGMRVVVNALVGAVPSIFNVLLVCLIFWLIFSIMGVNLFAGKFSYCFNETSQEIIDTKVVDNKTECIALIKANFTEVRWKNVKVNYDNVGIGYLSLLQVATFKGWTDIMYAAVDSRDVESQPIYEVNLYMYLYFVIFIIFGSFFTLNLFIGVIIDNFNQQKAKLGGQDIFMTEEQKKYYNAMKKLGSKKPQKPVPRPENPFQGLVFDLVTKQIFDVFIMVLICLNMVTMMVETDEQSDKKEEVLYWINVVFILIFTTECTLKIIALRRHYFSIGWNIFDFVVVILSILGLLLADIIEKYFVSPTLFRVIRLARIGRVLRLIRGAKGIRTLLFALMMSLPALFNIGLLLFLIMFIFSIFGMSNFAYVKKEALIDDMFNFETFGNSMICLFMITTSAGWDGLLSPIMNTPPDCDPNVENPGTTVRGNCGSPAIGIAFFSTYIIMSFLVVVNMFIAIILENFNVATEESSDPLCEDDFEMFYETWEKFDPDASQFIQYSKLSDFCDTLKEPLRIPQPNTIKLISMDLPLVPGDRIHCMDILLALTAEVLGDSDEMDTLKATMEEKFMANNPSKVSYEPISSTLLRKEEEVAATVIQRAYRKYLLLRTVRLASFMYREKTEGRGKEKAPETTGLLCKQFSQLYGFNKETDEPLQSKANRLGQVELQSEVLLHAVPPLRSSEFLQERDQRETSV.

Residues 1 to 126 (MRTLLPPVGS…IVAIKILIHS (126 aa)) lie on the Cytoplasmic side of the membrane. The segment at 28–50 (QQIREEERKRTNAQVSEELPEPA) is disordered. The stretch at 108–431 (LLSPFNALRI…VVAMAYAEQN (324 aa)) is one I repeat. A helical membrane pass occupies residues 127 to 145 (LFSLFIMATILTNCAFMTL). At 146–152 (SDPPAWS) the chain is on the extracellular side. Residues 153-173 (KTMEYVFTFIYTFEATIKILS) form a helical membrane-spanning segment. Residues 174–187 (RGFCVGKFTFLKDP) lie on the Cytoplasmic side of the membrane. A helical membrane pass occupies residues 188-205 (WNWLDFMVISMAYLTELV). The Extracellular portion of the chain corresponds to 206 to 211 (DLGNVS). The N-linked (GlcNAc...) asparagine glycan is linked to Asn209. The chain crosses the membrane as a helical span at residues 212–228 (VLRTFRVLRALKTITVI). The Cytoplasmic portion of the chain corresponds to 229–247 (PGLKTIVGALIQSVRKLAD). A helical membrane pass occupies residues 248–267 (AMVLTVFCLSVFALIGLQLF). Over 268–368 (MGNLRQKCVL…PNYGYTSYDS (101 aa)) the chain is Extracellular. The cysteines at positions 275 and 337 are disulfide-linked. N-linked (GlcNAc...) asparagine glycosylation is found at Asn285 and Asn339. Cys346 and Cys352 form a disulfide bridge. Residues 369-393 (FGWAFLALFRLMTQDFWENLFQLTL) constitute an intramembrane region (pore-forming). The Extracellular segment spans residues 394–400 (RTAGKTY). A helical transmembrane segment spans residues 401–421 (MIFFVVVIFLGSFYLINLILA). Residues 422 to 513 (VVAMAYAEQN…ECLYAIVMDP (92 aa)) are Cytoplasmic-facing. The II repeat unit spans residues 495–766 (CCGCWRHLKE…QIAINRINRA (272 aa)). The helical transmembrane segment at 514–532 (FVDLGITICIILNTVFMAM) threads the bilayer. Residues 533–543 (EHYPMSADFEE) are Extracellular-facing. The chain crosses the membrane as a helical span at residues 544-563 (LLSVGNLVFTGIFTGEMVFK). Over 564-577 (ILAMDPYFYFQVGW) the chain is Cytoplasmic. A helical membrane pass occupies residues 578 to 597 (NIFDSIIVTISLVELGLANV). The Extracellular portion of the chain corresponds to 598–599 (QG). The chain crosses the membrane as a helical span at residues 600–617 (LSVLRSFRLMRVFKLAKS). Over 618-633 (WPTLNMLIKIIGNSVG) the chain is Cytoplasmic. The chain crosses the membrane as a helical span at residues 634–652 (ALGNLTLVLAIIVFIFAVV). Topologically, residues 653–681 (GMQLFGKNYKDCVCRISEDCVLPRWHMND) are extracellular. Cys666 and Cys672 form a disulfide bridge. An intramembrane region (pore-forming) is located at residues 682-702 (FFHAFLIIFRVLCGEWIESMW). Residues 703 to 713 (DCMEVSGQTMC) are Extracellular-facing. Cys704 and Cys713 are joined by a disulfide. Residues 714-732 (LIVFMMVLVIGNLVVLNLF) traverse the membrane as a helical segment. Topologically, residues 733 to 919 (LALLLSSFSG…TCFSIVENNY (187 aa)) are cytoplasmic. Over residues 834 to 845 (SDSDDSDYDEDK) the composition is skewed to acidic residues. The segment at 834–862 (SDSDDSDYDEDKDSQCDESSVCSSVQKPE) is disordered. The stretch at 900-1215 (RGKIWCNIRR…KKYYNAMKKL (316 aa)) is one III repeat. The chain crosses the membrane as a helical span at residues 920-937 (FESFIVFMILLSSGALAF). Over 938–950 (EDIYLEKHQLIKS) the chain is Extracellular. The helical transmembrane segment at 951–969 (ILEYADKVFTYVFVMEMVL) threads the bilayer. At 970-983 (KWFAYGFKSYFSNA) the chain is on the cytoplasmic side. A helical membrane pass occupies residues 984–1002 (WCWLDFLIVDVSLVSLTAN). Over 1003-1010 (ILGYSELG) the chain is Extracellular. A helical transmembrane segment spans residues 1011–1029 (AIKSLRTLRALRPLRALSR). At 1030 to 1046 (FEGMRVVVNALVGAVPS) the chain is on the cytoplasmic side. A helical transmembrane segment spans residues 1047-1066 (IFNVLLVCLIFWLIFSIMGV). Residues 1067–1119 (NLFAGKFSYCFNETSQEIIDTKVVDNKTECIALIKANFTEVRWKNVKVNYDNV) are Extracellular-facing. A disulfide bond links Cys1076 and Cys1096. Asn1078 and Asn1092 each carry an N-linked (GlcNAc...) asparagine glycan. Residues 1120–1141 (GIGYLSLLQVATFKGWTDIMYA) constitute an intramembrane region (pore-forming). Topologically, residues 1142–1158 (AVDSRDVESQPIYEVNL) are extracellular. The helical transmembrane segment at 1159 to 1180 (YMYLYFVIFIIFGSFFTLNLFI) threads the bilayer. The Cytoplasmic portion of the chain corresponds to 1181–1243 (GVIIDNFNQQ…LVFDLVTKQI (63 aa)). Residues 1199–1201 (IFM) form an important for rapid channel inactivation region. The IV repeat unit spans residues 1224–1521 (VPRPENPFQG…WEKFDPDASQ (298 aa)). The chain crosses the membrane as a helical span at residues 1244–1261 (FDVFIMVLICLNMVTMMV). Topologically, residues 1262–1272 (ETDEQSDKKEE) are extracellular. The chain crosses the membrane as a helical span at residues 1273-1291 (VLYWINVVFILIFTTECTL). At 1292 to 1303 (KIIALRRHYFSI) the chain is on the cytoplasmic side. Residues 1304–1321 (GWNIFDFVVVILSILGLL) form a helical membrane-spanning segment. At 1322–1334 (LADIIEKYFVSPT) the chain is on the extracellular side. Residues 1335–1351 (LFRVIRLARIGRVLRLI) form a helical membrane-spanning segment. Residues 1352-1370 (RGAKGIRTLLFALMMSLPA) are Cytoplasmic-facing. Residues 1371 to 1388 (LFNIGLLLFLIMFIFSIF) form a helical membrane-spanning segment. Residues 1389–1410 (GMSNFAYVKKEALIDDMFNFET) are Extracellular-facing. Positions 1411-1433 (FGNSMICLFMITTSAGWDGLLSP) form an intramembrane region, pore-forming. Topologically, residues 1434 to 1462 (IMNTPPDCDPNVENPGTTVRGNCGSPAIG) are extracellular. Residues Cys1441 and Cys1456 are joined by a disulfide bond. Residues 1463-1485 (IAFFSTYIIMSFLVVVNMFIAII) traverse the membrane as a helical segment. At 1486–1719 (LENFNVATEE…QERDQRETSV (234 aa)) the chain is on the cytoplasmic side. An IQ domain is found at 1615 to 1644 (EEVAATVIQRAYRKYLLLRTVRLASFMYRE).

Belongs to the sodium channel (TC 1.A.1.10) family. Nav1.4/SCN4A subfamily. As to quaternary structure, voltage-gated sodium (Nav) channels consist of an ion-conducting alpha subunit which is functional on its own associated with regulatory beta subunits.

The protein resides in the cell membrane. It catalyses the reaction Na(+)(in) = Na(+)(out). Its function is as follows. Pore-forming subunit of a voltage-gated sodium (Nav) channel that directly mediates the depolarizing phase of action potentials in excitable membranes. Navs, also called VGSCs (voltage-gated sodium channels) or VDSCs (voltage-dependent sodium channels), operate by switching between closed and open conformations depending on the voltage difference across the membrane. In the open conformation they allow Na(+) ions to selectively pass through the pore, along their electrochemical gradient. The influx of Na+ ions provokes membrane depolarization, initiating the propagation of electrical signals throughout cells and tissues. This chain is Sodium channel protein type 4 subunit alpha B (scn4ab), found in Takifugu rubripes (Japanese pufferfish).